The sequence spans 482 residues: Cilia- and flagella-associated protein 53 (482 aa).

3 coiled-coil regions span residues 9 to 40, 67 to 124, and 152 to 413; these read DARIQKMRELEERLANLKADRKVEQKMVAVAE, ADLN…QALA, and IEER…AKDA. The segment at 462–482 is disordered; that stretch reads VNQTLSSTDPPVWHGRRKFDW.

This sequence belongs to the CFAP53 family.

Its subcellular location is the cell projection. The protein localises to the cilium. It localises to the flagellum. Its function is as follows. May play a role in filopodium movement. The protein is Cilia- and flagella-associated protein 53 of Chlamydomonas reinhardtii (Chlamydomonas smithii).